A 120-amino-acid polypeptide reads, in one-letter code: NAD(P)H-quinone oxidoreductase subunit 3, chloroplastic (120 aa).

3 helical membrane-spanning segments follow: residues 9 to 29 (IFWA…LISG), 64 to 84 (MFAL…PWAM), and 88 to 108 (VLGV…ILGL).

Belongs to the complex I subunit 3 family. In terms of assembly, NDH is composed of at least 16 different subunits, 5 of which are encoded in the nucleus.

It localises to the plastid. Its subcellular location is the chloroplast thylakoid membrane. The enzyme catalyses a plastoquinone + NADH + (n+1) H(+)(in) = a plastoquinol + NAD(+) + n H(+)(out). It catalyses the reaction a plastoquinone + NADPH + (n+1) H(+)(in) = a plastoquinol + NADP(+) + n H(+)(out). Functionally, NDH shuttles electrons from NAD(P)H:plastoquinone, via FMN and iron-sulfur (Fe-S) centers, to quinones in the photosynthetic chain and possibly in a chloroplast respiratory chain. The immediate electron acceptor for the enzyme in this species is believed to be plastoquinone. Couples the redox reaction to proton translocation, and thus conserves the redox energy in a proton gradient. This Olimarabidopsis pumila (Dwarf rocket) protein is NAD(P)H-quinone oxidoreductase subunit 3, chloroplastic.